The chain runs to 338 residues: POU domain, class 4, transcription factor 3 (338 aa).

A POU-IV box motif is present at residues 56–65 (RAEALAAVDI). Residues 179–256 (DVESDPRELE…VLQAWLEEAE (78 aa)) enclose the POU-specific domain. A DNA-binding region (homeobox) is located at residues 274–333 (RKRKRTSIAAPEKRSLEAYFAIQPRPSSEKIAAIAEKLDLKKNVVRVWFCNQRQKQKRMK).

This sequence belongs to the POU transcription factor family. Class-4 subfamily. Interacts with ISL1. As to expression, brain.

It localises to the nucleus. The protein localises to the cytoplasm. In terms of biological role, acts as a transcriptional activator. Acts by binding to sequences related to the consensus octamer motif 5'-ATGCAAAT-3' in the regulatory regions of its target genes. Involved in the auditory system development, required for terminal differentiation of hair cells in the inner ear. In Mus musculus (Mouse), this protein is POU domain, class 4, transcription factor 3.